The sequence spans 1423 residues: Histone-lysine N-methyltransferase ATXR7 (1423 aa).

Residues H263–A312 form the GYF domain. 3 disordered regions span residues C923–K960, C1057–D1097, and L1115–K1158. Over residues Q936–K949 the composition is skewed to basic residues. A compositionally biased stretch (basic and acidic residues) spans N950–T959. Polar residues predominate over residues C1057–I1071. Composition is skewed to basic and acidic residues over residues L1115 to Q1124 and H1140 to P1157. An SET domain is found at K1266 to K1383. Y1382 provides a ligand contact to S-adenosyl-L-methionine.

Belongs to the class V-like SAM-binding methyltransferase superfamily. Histone-lysine methyltransferase family. TRX/MLL subfamily. Expressed in the shoot and root apices, vascular tissues and mesophyll cells of rosette leaves.

It localises to the nucleus. The enzyme catalyses L-lysyl(4)-[histone H3] + 3 S-adenosyl-L-methionine = N(6),N(6),N(6)-trimethyl-L-lysyl(4)-[histone H3] + 3 S-adenosyl-L-homocysteine + 3 H(+). The catalysed reaction is L-lysyl(36)-[histone H3] + 2 S-adenosyl-L-methionine = N(6),N(6)-dimethyl-L-lysyl(36)-[histone H3] + 2 S-adenosyl-L-homocysteine + 2 H(+). Its function is as follows. Histone methyltransferase involved in regulation of flowering time. Required for the expression of the flowering repressors FLC and MADS-box genes of the MAF family. Required for histone H3 dimethylation on 'Lys-36' H3K36me2 at the FLC locus. Required for histone H3 trimethylation on 'Lys-4' (H3K4me3) at the FLC locus. Prevents trimethylation on 'Lys-27' (H3K27me3) at the same locus. Involved in the control of seed dormancy and germination. In Arabidopsis thaliana (Mouse-ear cress), this protein is Histone-lysine N-methyltransferase ATXR7.